Consider the following 414-residue polypeptide: Putative competence-damage inducible protein (414 aa).

It belongs to the CinA family.

This Limosilactobacillus fermentum (strain NBRC 3956 / LMG 18251) (Lactobacillus fermentum) protein is Putative competence-damage inducible protein.